We begin with the raw amino-acid sequence, 268 residues long: 5'-nucleotidase SurE (268 aa).

4 residues coordinate a divalent metal cation: D8, D9, S40, and N98.

Belongs to the SurE nucleotidase family. A divalent metal cation serves as cofactor.

Its subcellular location is the cytoplasm. It carries out the reaction a ribonucleoside 5'-phosphate + H2O = a ribonucleoside + phosphate. Nucleotidase that shows phosphatase activity on nucleoside 5'-monophosphates. The sequence is that of 5'-nucleotidase SurE from Trichodesmium erythraeum (strain IMS101).